We begin with the raw amino-acid sequence, 155 residues long: Protein-export protein SecB (155 aa).

It belongs to the SecB family. As to quaternary structure, homotetramer, a dimer of dimers. One homotetramer interacts with 1 SecA dimer.

The protein localises to the cytoplasm. One of the proteins required for the normal export of preproteins out of the cell cytoplasm. It is a molecular chaperone that binds to a subset of precursor proteins, maintaining them in a translocation-competent state. It also specifically binds to its receptor SecA. This is Protein-export protein SecB from Citrobacter koseri (strain ATCC BAA-895 / CDC 4225-83 / SGSC4696).